The chain runs to 90 residues: MFTIDLSIRNTAFPISVQRKSAEDAEAVYQLILAAIRSGNPDIVELKCEGKTEKKIAVRASEISGVQIVQKDGTTPGGGRPPGFFAVAAE.

The protein belongs to the UPF0367 family.

This is UPF0367 protein Npun_R4552 from Nostoc punctiforme (strain ATCC 29133 / PCC 73102).